Here is a 741-residue protein sequence, read N- to C-terminus: Mitofusin-1 (741 aa).

The Cytoplasmic segment spans residues 1–584 (MAETVSPLKH…AAQEELMITL (584 aa)). The tract at residues 9 to 73 (KHFVLAKKAI…LAVIGEVLSR (65 aa)) is part of a helix bundle domain, formed by helices from N-terminal and C-terminal regions. The Dynamin-type G domain occupies 72 to 321 (SRRHMKVAFF…ARLQEFQNFE (250 aa)). The tract at residues 82–89 (GRTSSGKS) is G1 motif. 85–90 (SSGKSS) is a GTP binding site. Residues 108–109 (TT) form a G2 motif region. Residues 178 to 181 (DSPG) form a G3 motif region. Position 237–240 (237–240 (NRWD)) interacts with GTP. The G4 motif stretch occupies residues 237-240 (NRWD). Position 266 (E266) is a region of interest, G5 motif. The GTP site is built by S284 and K286. The tract at residues 338–364 (EQHTIRAKQILDTVKNILDSVNVAAAE) is part of a helix bundle domain, formed by helices from N-terminal and C-terminal regions. Residues 371-408 (EEREDQIDRLDFIRNQMNLLTLDVKKKIKEVTEEVANK) are a coiled coil. Residues 585–605 (ITGLASLTSRTSMGIIVVGGV) traverse the membrane as a helical segment. At 606–608 (IWK) the chain is on the mitochondrial intermembrane side. The chain crosses the membrane as a helical span at residues 609–629 (TVGWKLISVTLSMYGALYLYE). The Cytoplasmic portion of the chain corresponds to 630–741 (RLTWTTRAKE…QFLHPSSGES (112 aa)). The stretch at 677–735 (FARLCQQVDVTQKHLEEEIARLSKEIDQLEKIQNNSKLLRNKAVQLESELENFSKQFLH) forms a coiled coil. The part of a helix bundle domain, formed by helices from N-terminal and C-terminal regions stretch occupies residues 703 to 734 (DQLEKIQNNSKLLRNKAVQLESELENFSKQFL).

This sequence belongs to the TRAFAC class dynamin-like GTPase superfamily. Dynamin/Fzo/YdjA family. Mitofusin subfamily. As to quaternary structure, homodimer, also in the absence of bound GTP. Forms higher oligomers in the presence of a transition state GTP analog. Forms homomultimers and heteromultimers with MFN2. Oligomerization is essential for mitochondrion fusion. Component of a high molecular weight multiprotein complex. Interacts with VAT1. Interacts with THG1L; THG1L probably functions as a guanyl-nucleotide exchange factor/GEF, activating MFN1. Ubiquitinated by MARCHF5. When mitochondria are depolarized and dysfunctional, it is ubiquitinated by a SCF (SKP1-CUL1-F-box protein) E3 ubiquitin-protein ligase complex that contains FBXO7 and PRKN. Ubiquitinated by non-degradative ubiquitin by PRKN, promoting mitochondrial fusion; deubiquitination by USP30 inhibits mitochondrial fusion. Detected in adult heart. Detected in embryos (at protein level). Widely expressed.

The protein localises to the mitochondrion outer membrane. The enzyme catalyses GTP + H2O = GDP + phosphate + H(+). Mitochondrial outer membrane GTPase that mediates mitochondrial clustering and fusion. Membrane clustering requires GTPase activity. It may involve a major rearrangement of the coiled coil domains. Mitochondria are highly dynamic organelles, and their morphology is determined by the equilibrium between mitochondrial fusion and fission events. Overexpression induces the formation of mitochondrial networks (in vitro). Has low GTPase activity. The polypeptide is Mitofusin-1 (Mfn1) (Mus musculus (Mouse)).